Here is a 90-residue protein sequence, read N- to C-terminus: QKACTMDYFPVCCQIVLGGGAYTAGNPCSCQGFVASKGTCDNPYPCPCTTEAQFPVCCTTQWGLVSATGNCACGCMGGVPVSDGPCPEVY.

Q1 is modified (pyrrolidone carboxylic acid). C46 and C71 are joined by a disulfide.

The N-terminus is blocked. In terms of processing, contains seven disulfide bonds. Post-translationally, proteolytically cleaved. Major form may consist of cleaved, disulfide-bonded subunits.

Lectin with specificity for complex N-linked glycans and O-linked glycans. Has hemagglutinating activity towards rabbit erythrocytes that is inhibited by N-acetyl-D-galactosamine. This chain is Lectin-1, found in Hypnea cervicornis (Brazilian red alga).